The following is a 388-amino-acid chain: Methylthioribose-1-phosphate isomerase (388 aa).

Catalysis depends on aspartate 258, which acts as the Proton donor.

This sequence belongs to the eIF-2B alpha/beta/delta subunits family. MtnA subfamily.

The protein resides in the cytoplasm. Its subcellular location is the nucleus. It catalyses the reaction 5-(methylsulfanyl)-alpha-D-ribose 1-phosphate = 5-(methylsulfanyl)-D-ribulose 1-phosphate. It participates in amino-acid biosynthesis; L-methionine biosynthesis via salvage pathway; L-methionine from S-methyl-5-thio-alpha-D-ribose 1-phosphate: step 1/6. In terms of biological role, catalyzes the interconversion of methylthioribose-1-phosphate (MTR-1-P) into methylthioribulose-1-phosphate (MTRu-1-P). In Neurospora crassa (strain ATCC 24698 / 74-OR23-1A / CBS 708.71 / DSM 1257 / FGSC 987), this protein is Methylthioribose-1-phosphate isomerase (mri-1).